Here is a 29-residue protein sequence, read N- to C-terminus: Bacteriocin (29 aa).

It localises to the secreted. Has antibacterial activity against strains of L.monocytogenes, L.lactis, B.subtilis, S.typhi, S.aureus, C.perfringens, E.aerogenes and M.luteus but not against E.coli, S.sonnei, S.pneumoniae, S.faecalis, P.aeruginosa, K.pneumoniae or P.vulgaris. This chain is Bacteriocin, found in Lactococcus lactis subsp. lactis (Streptococcus lactis).